Here is a 118-residue protein sequence, read N- to C-terminus: T cell receptor gamma variable 3 (118 aa).

Residues 1 to 17 (MRWALLVLLAFLSPASQ) form the signal peptide. Residues 18–118 (KSSNLEGRTK…GVYYCATWDR (101 aa)) form the Ig-like domain. C41 and C113 are oxidised to a cystine. N-linked (GlcNAc...) asparagine glycosylation is present at N106.

As to quaternary structure, gamma-delta TR is a heterodimer composed of a gamma and delta chain; disulfide-linked. The gamma-delta TR is associated with the transmembrane signaling CD3 coreceptor proteins following the stoichiometry: a single gamma-delta TR heterodimer associates with one CD3D-CD3E heterodimer, one CD3G-CD3E heterodimer and one CD247 homodimer forming a stable octameric structure. Upon activation, gamma-delta TR complex associates with FCER1G to initiate intracellular signaling.

Its subcellular location is the cell membrane. In terms of biological role, v region of the variable domain of T cell receptor (TR) gamma chain that participates in the antigen recognition. Gamma-delta TRs recognize a variety of self and foreign non-peptide antigens frequently expressed at the epithelial boundaries between the host and external environment, including endogenous lipids presented by MH-like protein CD1D and phosphoantigens presented by butyrophilin-like molecule BTN3A1. Upon antigen recognition induces rapid, innate-like immune responses involved in pathogen clearance and tissue repair. Binding of gamma-delta TR complex to antigen triggers phosphorylation of immunoreceptor tyrosine-based activation motifs (ITAMs) in the CD3 chains by the LCK and FYN kinases, allowing the recruitment, phosphorylation, and activation of ZAP70 that facilitates phosphorylation of the scaffolding proteins LCP2 and LAT. This lead to the formation of a supramolecular signalosome that recruits the phospholipase PLCG1, resulting in calcium mobilization and ERK activation, ultimately leading to T cell expansion and differentiation into effector cells. Gamma-delta TRs are produced through somatic rearrangement of a limited repertoire of variable (V), diversity (D), and joining (J) genes. The potential diversity of gamma-delta TRs is conferred by the unique ability to rearrange (D) genes in tandem and to utilize all three reading frames. The combinatorial diversity is considerably increased by the sequence exonuclease trimming and random nucleotide (N) region additions which occur during the V-(D)-J rearrangements. This Homo sapiens (Human) protein is T cell receptor gamma variable 3.